The chain runs to 232 residues: 5'-methylthioadenosine/S-adenosylhomocysteine nucleosidase (232 aa).

Catalysis depends on Glu-12, which acts as the Proton acceptor. Residues Gly-78, Ile-152, and 173–174 contribute to the substrate site; that span reads ME. Asp-197 serves as the catalytic Proton donor.

Belongs to the PNP/UDP phosphorylase family. MtnN subfamily. As to quaternary structure, homodimer.

It catalyses the reaction S-adenosyl-L-homocysteine + H2O = S-(5-deoxy-D-ribos-5-yl)-L-homocysteine + adenine. The catalysed reaction is S-methyl-5'-thioadenosine + H2O = 5-(methylsulfanyl)-D-ribose + adenine. It carries out the reaction 5'-deoxyadenosine + H2O = 5-deoxy-D-ribose + adenine. The protein operates within amino-acid biosynthesis; L-methionine biosynthesis via salvage pathway; S-methyl-5-thio-alpha-D-ribose 1-phosphate from S-methyl-5'-thioadenosine (hydrolase route): step 1/2. In terms of biological role, catalyzes the irreversible cleavage of the glycosidic bond in both 5'-methylthioadenosine (MTA) and S-adenosylhomocysteine (SAH/AdoHcy) to adenine and the corresponding thioribose, 5'-methylthioribose and S-ribosylhomocysteine, respectively. Also cleaves 5'-deoxyadenosine, a toxic by-product of radical S-adenosylmethionine (SAM) enzymes, into 5-deoxyribose and adenine. Thus, is required for in vivo function of the radical SAM enzymes biotin synthase and lipoic acid synthase, that are inhibited by 5'-deoxyadenosine accumulation. The chain is 5'-methylthioadenosine/S-adenosylhomocysteine nucleosidase from Salmonella agona (strain SL483).